The chain runs to 437 residues: Enolase (437 aa).

Gln-162 is a binding site for (2R)-2-phosphoglycerate. The active-site Proton donor is Glu-204. Mg(2+) is bound by residues Asp-251, Glu-297, and Asp-324. (2R)-2-phosphoglycerate contacts are provided by Lys-349, Arg-378, Ser-379, and Lys-400. Catalysis depends on Lys-349, which acts as the Proton acceptor.

Belongs to the enolase family. Requires Mg(2+) as cofactor.

Its subcellular location is the cytoplasm. The protein resides in the secreted. The protein localises to the cell surface. It catalyses the reaction (2R)-2-phosphoglycerate = phosphoenolpyruvate + H2O. The protein operates within carbohydrate degradation; glycolysis; pyruvate from D-glyceraldehyde 3-phosphate: step 4/5. Functionally, catalyzes the reversible conversion of 2-phosphoglycerate (2-PG) into phosphoenolpyruvate (PEP). It is essential for the degradation of carbohydrates via glycolysis. The sequence is that of Enolase from Chlorobaculum parvum (strain DSM 263 / NCIMB 8327) (Chlorobium vibrioforme subsp. thiosulfatophilum).